The chain runs to 236 residues: Ribonuclease HIII (236 aa).

Positions 9 to 236 (LYLIGSDESG…NVASFLKQLA (228 aa)) constitute an RNase H type-2 domain. Positions 15, 16, and 122 each coordinate a divalent metal cation.

The protein belongs to the RNase HII family. RnhC subfamily. It depends on a divalent metal cation as a cofactor.

The protein localises to the cytoplasm. The catalysed reaction is Endonucleolytic cleavage to 5'-phosphomonoester.. In terms of biological role, endonuclease that specifically degrades the RNA of RNA-DNA hybrids. This is Ribonuclease HIII (rnhC) from Mycoplasma pneumoniae (strain ATCC 29342 / M129 / Subtype 1) (Mycoplasmoides pneumoniae).